A 103-amino-acid polypeptide reads, in one-letter code: Small ribosomal subunit protein uS10 (103 aa).

This sequence belongs to the universal ribosomal protein uS10 family. As to quaternary structure, part of the 30S ribosomal subunit.

Functionally, involved in the binding of tRNA to the ribosomes. In Cellvibrio japonicus (strain Ueda107) (Pseudomonas fluorescens subsp. cellulosa), this protein is Small ribosomal subunit protein uS10.